The chain runs to 270 residues: MSRTIPFLFKLVNRAVILPTAGFTLGVGAFVKAWPDDAGVLSLNDPQTPAELISATKSRQPMELQRVDILAQIEKSEVYNKLAQDEKMHHVLFSEKIPSGHREYHVGQGLLFGKGKLEIDPLVFHDVNHGELTVIYHLGAELGNRDGNVHKGLLSLLLDEALCYCGFPLLPSKRGVTARLSLEFFEDIPVDTTIILKANVKEIKGRKCIIEGHLEQFPLEVSSRNGTRSWNLPHIWGFNHKQEMAKKFAKANCILVEPTWFKYFKWLDMF.

Residues 1–12 (MSRTIPFLFKLV) constitute a mitochondrion transit peptide.

Associates with the mitochondrial ribosome.

Its subcellular location is the mitochondrion. Its function is as follows. Component of MIOREX complexes, large expressome-like assemblies of ribosomes with factors involved in all the steps of post-transcriptional gene expression. The protein is MIOREX complex component 3 of Saccharomyces cerevisiae (strain ATCC 204508 / S288c) (Baker's yeast).